A 68-amino-acid chain; its full sequence is Beta-toxin Cl13 (68 aa).

One can recognise an LCN-type CS-alpha/beta domain in the interval 1–66 (KEGYLVDYHT…VWPLPNKRCK (66 aa)). 4 cysteine pairs are disulfide-bonded: C12-C65, C16-C41, C25-C46, and C29-C48. Residue K66 is modified to Lysine amide.

It belongs to the long (4 C-C) scorpion toxin superfamily. Sodium channel inhibitor family. Beta subfamily. As to expression, expressed by the venom gland.

The protein localises to the secreted. In terms of biological role, beta toxins bind voltage-independently at site-4 of sodium channels (Nav) and shift the voltage of activation toward more negative potentials thereby affecting sodium channel activation and promoting spontaneous and repetitive firing. Inhibits sodium channels Nav1.4/SCN4A, Nav1.5/SCN5A and Nav1.6/SCN8A. Also has a weak inhibitory effect on Nav1.2/SCN2A. Is lethal to mice. This chain is Beta-toxin Cl13, found in Centruroides limpidus (Mexican scorpion).